The primary structure comprises 115 residues: Hydrogenase maturation factor HypA (115 aa).

His-2 contacts Ni(2+). The Zn(2+) site is built by Cys-73, Cys-76, Cys-89, and Cys-92.

It belongs to the HypA/HybF family.

Functionally, involved in the maturation of [NiFe] hydrogenases. Required for nickel insertion into the metal center of the hydrogenase. This Parabacteroides distasonis (strain ATCC 8503 / DSM 20701 / CIP 104284 / JCM 5825 / NCTC 11152) protein is Hydrogenase maturation factor HypA.